The following is a 418-amino-acid chain: Tyrosine--tRNA ligase (418 aa).

Positions 42–51 (PTSPDLHLGH) match the 'HIGH' region motif. A 'KMSKS' region motif is present at residues 226 to 230 (KMSKS). Lys-229 contacts ATP. The S4 RNA-binding domain occupies 339 to 400 (VRLVALLTKS…GKRNFIKVRL (62 aa)).

Belongs to the class-I aminoacyl-tRNA synthetase family. TyrS type 2 subfamily. In terms of assembly, homodimer.

Its subcellular location is the cytoplasm. The catalysed reaction is tRNA(Tyr) + L-tyrosine + ATP = L-tyrosyl-tRNA(Tyr) + AMP + diphosphate + H(+). Functionally, catalyzes the attachment of tyrosine to tRNA(Tyr) in a two-step reaction: tyrosine is first activated by ATP to form Tyr-AMP and then transferred to the acceptor end of tRNA(Tyr). This is Tyrosine--tRNA ligase from Xylella fastidiosa (strain Temecula1 / ATCC 700964).